The primary structure comprises 512 residues: 2-isopropylmalate synthase (512 aa).

A Pyruvate carboxyltransferase domain is found at 5-268; the sequence is LIIFDTTLRD…DVDIETQHIL (264 aa). Mn(2+) contacts are provided by D14, H202, H204, and N239. Residues 394–512 are regulatory domain; that stretch reads SFVSLSQHSE…SKADRVAAQG (119 aa).

This sequence belongs to the alpha-IPM synthase/homocitrate synthase family. LeuA type 1 subfamily. Homodimer. Mn(2+) is required as a cofactor.

The protein localises to the cytoplasm. It catalyses the reaction 3-methyl-2-oxobutanoate + acetyl-CoA + H2O = (2S)-2-isopropylmalate + CoA + H(+). The protein operates within amino-acid biosynthesis; L-leucine biosynthesis; L-leucine from 3-methyl-2-oxobutanoate: step 1/4. Functionally, catalyzes the condensation of the acetyl group of acetyl-CoA with 3-methyl-2-oxobutanoate (2-ketoisovalerate) to form 3-carboxy-3-hydroxy-4-methylpentanoate (2-isopropylmalate). The polypeptide is 2-isopropylmalate synthase (Albidiferax ferrireducens (strain ATCC BAA-621 / DSM 15236 / T118) (Rhodoferax ferrireducens)).